A 443-amino-acid polypeptide reads, in one-letter code: Structure-specific endonuclease subunit SLX1 homolog (443 aa).

A disordered region spans residues M1–I27. Residues E171–K258 form the GIY-YIG domain. Residues C340–C395 form an SLX1-type zinc finger.

The protein belongs to the SLX1 family. As to quaternary structure, forms a heterodimer with him-18/slx-4. It depends on a divalent metal cation as a cofactor.

It is found in the nucleus. In terms of biological role, catalytic subunit of a heterodimeric structure-specific endonuclease that resolves DNA secondary structures generated during DNA repair and recombination. Has endonuclease activity towards branched DNA substrates, introducing single-strand cuts in duplex DNA close to junctions with ss-DNA (Potential). Has a preference for replication forks over 5' flap structures or Holliday junctions and shows much lower activity toward 3' flap structures. Required for proper crossover distribution through inhibition of crossover formation at the central region of chromosomes. The sequence is that of Structure-specific endonuclease subunit SLX1 homolog from Caenorhabditis elegans.